Here is a 195-residue protein sequence, read N- to C-terminus: Alkyl hydroperoxide reductase C (195 aa).

The region spanning 4–170 (LTIGDQFPEY…VLRVLDALQS (167 aa)) is the Thioredoxin domain. Residue Lys-41 forms an Isoglutamyl lysine isopeptide (Lys-Gln) (interchain with Q-Cter in protein Pup) linkage. Residue Cys-61 is the Cysteine sulfenic acid (-SOH) intermediate of the active site.

This sequence belongs to the peroxiredoxin family. AhpC/Prx1 subfamily. Homodimer; disulfide-linked, upon oxidation. 6 homodimers assemble to form a ring-like dodecamer. Identified in a complex with AhpD, DlaT and Lpd.

It localises to the cytoplasm. It carries out the reaction N(6)-[(R)-dihydrolipoyl]-L-lysyl-[lipoyl-carrier protein] + a hydroperoxide = N(6)-[(R)-lipoyl]-L-lysyl-[lipoyl-carrier protein] + an alcohol + H2O. Its function is as follows. Thiol-specific peroxidase that catalyzes the reduction of hydrogen peroxide and organic hydroperoxides to water and alcohols, respectively. Plays a role in cell protection against oxidative stress by detoxifying peroxides. Together with AhpD, DlaT and Lpd, constitutes an NADH-dependent peroxidase active against hydrogen and alkyl peroxides as well as serving as a peroxynitrite reductase, thus protecting the bacterium against reactive nitrogen intermediates and oxidative stress generated by the host immune system. Does not however seem to play a role in detoxification of isoniazid. This chain is Alkyl hydroperoxide reductase C, found in Mycolicibacterium smegmatis (strain ATCC 700084 / mc(2)155) (Mycobacterium smegmatis).